The following is a 445-amino-acid chain: Nuclear hormone receptor family member nhr-1 (445 aa).

The segment at Pro-19–Phe-55 is disordered. Over residues Ser-36–Asn-51 the composition is skewed to polar residues. Residues Gly-70–Ile-145 constitute a DNA-binding region (nuclear receptor). NR C4-type zinc fingers lie at residues Cys-73 to Cys-93 and Cys-109 to Cys-133. An NR LBD domain is found at Gln-179–Arg-444.

This sequence belongs to the nuclear hormone receptor family.

It localises to the nucleus. Functionally, orphan nuclear receptor which acts in concert with the insulin/IGF-1-like signaling (IIS) pathway during osmotic stress, perhaps in response to a ligand modified by the sulfotransferase ssu-1. This Caenorhabditis elegans protein is Nuclear hormone receptor family member nhr-1 (nhr-1).